The sequence spans 966 residues: Alanine--tRNA ligase (966 aa).

Zn(2+) is bound by residues His646, His650, Cys750, and His754. Positions 927–949 are disordered; that stretch reads DRLGGGGGGRPSLASAGGRDPEA.

It belongs to the class-II aminoacyl-tRNA synthetase family. Requires Zn(2+) as cofactor.

The protein resides in the cytoplasm. The catalysed reaction is tRNA(Ala) + L-alanine + ATP = L-alanyl-tRNA(Ala) + AMP + diphosphate. In terms of biological role, catalyzes the attachment of alanine to tRNA(Ala) in a two-step reaction: alanine is first activated by ATP to form Ala-AMP and then transferred to the acceptor end of tRNA(Ala). Also edits incorrectly charged Ser-tRNA(Ala) and Gly-tRNA(Ala) via its editing domain. The sequence is that of Alanine--tRNA ligase from Salinibacter ruber (strain DSM 13855 / M31).